The following is a 169-amino-acid chain: MMNANRLPTRILGLDPGLRRTGWGVLAVEGSRMTHIAHGVITPDEKAEFADRLLHLFEGITAVIEQHRPDEAAVEEVFLNTNAQSTLKLGHARAAALIAPARAGLLVAEYSTRLVKKAVVGTGAADKAQIGFMIARLLPTAGKTTADCADALAVAITHANLRVANRRVA.

Active-site residues include aspartate 15, glutamate 75, and aspartate 147. Mg(2+)-binding residues include aspartate 15, glutamate 75, and aspartate 147.

This sequence belongs to the RuvC family. As to quaternary structure, homodimer which binds Holliday junction (HJ) DNA. The HJ becomes 2-fold symmetrical on binding to RuvC with unstacked arms; it has a different conformation from HJ DNA in complex with RuvA. In the full resolvosome a probable DNA-RuvA(4)-RuvB(12)-RuvC(2) complex forms which resolves the HJ. The cofactor is Mg(2+).

It is found in the cytoplasm. It catalyses the reaction Endonucleolytic cleavage at a junction such as a reciprocal single-stranded crossover between two homologous DNA duplexes (Holliday junction).. Functionally, the RuvA-RuvB-RuvC complex processes Holliday junction (HJ) DNA during genetic recombination and DNA repair. Endonuclease that resolves HJ intermediates. Cleaves cruciform DNA by making single-stranded nicks across the HJ at symmetrical positions within the homologous arms, yielding a 5'-phosphate and a 3'-hydroxyl group; requires a central core of homology in the junction. The consensus cleavage sequence is 5'-(A/T)TT(C/G)-3'. Cleavage occurs on the 3'-side of the TT dinucleotide at the point of strand exchange. HJ branch migration catalyzed by RuvA-RuvB allows RuvC to scan DNA until it finds its consensus sequence, where it cleaves and resolves the cruciform DNA. The polypeptide is Crossover junction endodeoxyribonuclease RuvC (Caulobacter vibrioides (strain ATCC 19089 / CIP 103742 / CB 15) (Caulobacter crescentus)).